We begin with the raw amino-acid sequence, 206 residues long: Small ribosomal subunit protein uS4 (206 aa).

The interval 23-47 is disordered; it reads AKSPLNRREYGPGQHGQRRKGKLSD. The S4 RNA-binding domain occupies 94 to 157; it reads RRLDAVIYRA…RQLAIVLESV (64 aa).

Belongs to the universal ribosomal protein uS4 family. Part of the 30S ribosomal subunit. Contacts protein S5. The interaction surface between S4 and S5 is involved in control of translational fidelity.

Its function is as follows. One of the primary rRNA binding proteins, it binds directly to 16S rRNA where it nucleates assembly of the body of the 30S subunit. In terms of biological role, with S5 and S12 plays an important role in translational accuracy. This is Small ribosomal subunit protein uS4 from Paracoccus denitrificans (strain Pd 1222).